The following is a 426-amino-acid chain: Molybdopterin molybdenumtransferase 1 (426 aa).

The protein belongs to the MoeA family. The cofactor is Mg(2+).

It carries out the reaction adenylyl-molybdopterin + molybdate = Mo-molybdopterin + AMP + H(+). The protein operates within cofactor biosynthesis; molybdopterin biosynthesis. Functionally, catalyzes the insertion of molybdate into adenylated molybdopterin with the concomitant release of AMP. The protein is Molybdopterin molybdenumtransferase 1 (moeA1) of Mycobacterium tuberculosis (strain ATCC 25618 / H37Rv).